Consider the following 150-residue polypeptide: Small ribosomal subunit protein eS19 (150 aa).

It belongs to the eukaryotic ribosomal protein eS19 family. Part of the 30S ribosomal subunit.

May be involved in maturation of the 30S ribosomal subunit. This chain is Small ribosomal subunit protein eS19 (rps19e), found in Pyrococcus abyssi (strain GE5 / Orsay).